The chain runs to 25 residues: Caerin-2.3 (25 aa).

In terms of tissue distribution, expressed by the skin parotoid and/or rostral glands.

The protein localises to the secreted. In terms of biological role, acts as a male sex pheromone that attracts females. Has no antimicrobial activity. The protein is Caerin-2.3 of Ranoidea caerulea (Green tree frog).